A 190-amino-acid polypeptide reads, in one-letter code: Recombination protein RecR (190 aa).

A C4-type zinc finger spans residues 58 to 73 (CEQCGALSENELCEIC). The Toprim domain occupies 81 to 167 (NILCIVESPK…TFSKIAQGIP (87 aa)).

It belongs to the RecR family.

Its function is as follows. May play a role in DNA repair. It seems to be involved in an RecBC-independent recombinational process of DNA repair. It may act with RecF and RecO. This chain is Recombination protein RecR, found in Campylobacter jejuni (strain RM1221).